We begin with the raw amino-acid sequence, 513 residues long: MQLNASEISDLIKQRIGKFDLGVESRSEGTIVSLTDGIVRIHGLQDVMQGEMVEFPGNTYGMALNLERDSVGAVVLGSYEHLSEGDTAKCTGRILEVPVGEALLGRVVDALGNPIDGAGPIDAKLFSPIEKIAPGVISRQSVSQPLQTGLKAIDSMIPVGRGQRELIIGDRQTGKTAIAIDAIINQKGTGVKCIYVAVGQKQSSIANVVRKLQEHGAMEHTIVVSASASESAALQFIAPYAGCAMGEYFRDRGEDALIVYDDLTKQAWAYRQISLLLRRPPGREAYPGDVFYLHSRLLERASRINAEEVERLTKGEVKGKTGSLTALPIIETQAGDVSAFVPTNVISITDGQIFLETNLFNAGIRPAVNAGLSVSRVGGAAQTKVIKKLGGGIRLDLAQYRELAAFAQFASDLDEATRKQIERGQRVTELMKQNQYSPMSIAQMAVSLFAANEGYLDDIEVSKVRDFEDALQEYMKSQCAELLKSIDATGDYNDAIQAGLHEAIKKFKATHAW.

Glycine 169–threonine 176 is an ATP binding site.

It belongs to the ATPase alpha/beta chains family. F-type ATPases have 2 components, CF(1) - the catalytic core - and CF(0) - the membrane proton channel. CF(1) has five subunits: alpha(3), beta(3), gamma(1), delta(1), epsilon(1). CF(0) has three main subunits: a(1), b(2) and c(9-12). The alpha and beta chains form an alternating ring which encloses part of the gamma chain. CF(1) is attached to CF(0) by a central stalk formed by the gamma and epsilon chains, while a peripheral stalk is formed by the delta and b chains.

Its subcellular location is the cell inner membrane. It catalyses the reaction ATP + H2O + 4 H(+)(in) = ADP + phosphate + 5 H(+)(out). In terms of biological role, produces ATP from ADP in the presence of a proton gradient across the membrane. The alpha chain is a regulatory subunit. The sequence is that of ATP synthase subunit alpha 1 from Methylococcus capsulatus (strain ATCC 33009 / NCIMB 11132 / Bath).